A 213-amino-acid polypeptide reads, in one-letter code: Adenylate kinase (213 aa).

10–15 contacts ATP; that stretch reads GAGKGT. The NMP stretch occupies residues 30–59; that stretch reads STGDMFRAAIKEGTEMGKKAKEYMDKGALV. Residues T31, R36, 57-59, 85-88, and Q92 contribute to the AMP site; these read ALV and GFPR. Residues 126 to 163 form an LID region; that stretch reads GRRVCKNCGASYHVIFNPPQAEGKCNSCNGELYQRSDD. R127 is an ATP binding site. Zn(2+) is bound by residues C130 and C133. 136-137 is an ATP binding site; the sequence is SY. 2 residues coordinate Zn(2+): C150 and C153. AMP-binding residues include R160 and R171. Q199 is a binding site for ATP.

This sequence belongs to the adenylate kinase family. In terms of assembly, monomer.

Its subcellular location is the cytoplasm. The catalysed reaction is AMP + ATP = 2 ADP. Its pathway is purine metabolism; AMP biosynthesis via salvage pathway; AMP from ADP: step 1/1. Catalyzes the reversible transfer of the terminal phosphate group between ATP and AMP. Plays an important role in cellular energy homeostasis and in adenine nucleotide metabolism. The chain is Adenylate kinase from Desulforamulus reducens (strain ATCC BAA-1160 / DSM 100696 / MI-1) (Desulfotomaculum reducens).